We begin with the raw amino-acid sequence, 392 residues long: Stilbene synthase 5 (392 aa).

55–58 (KFNR) lines the substrate pocket. C164 is a catalytic residue. Substrate-binding positions include L267 and 305 to 307 (GGP).

It belongs to the thiolase-like superfamily. Chalcone/stilbene synthases family. Homodimer.

It localises to the cytoplasm. The enzyme catalyses 4-coumaroyl-CoA + 3 malonyl-CoA + 3 H(+) = trans-resveratrol + 4 CO2 + 4 CoA. It functions in the pathway phytoalexin biosynthesis; 3,4',5-trihydroxystilbene biosynthesis; 3,4',5-trihydroxystilbene from trans-4-coumarate: step 2/2. Mediates resistance to pathogens which are sensitive to stilbenes. In Vitis vinifera (Grape), this protein is Stilbene synthase 5.